The following is a 157-amino-acid chain: Small ribosomal subunit protein uS7 (157 aa).

This sequence belongs to the universal ribosomal protein uS7 family. In terms of assembly, part of the 30S ribosomal subunit. Contacts proteins S9 and S11.

In terms of biological role, one of the primary rRNA binding proteins, it binds directly to 16S rRNA where it nucleates assembly of the head domain of the 30S subunit. Is located at the subunit interface close to the decoding center, probably blocks exit of the E-site tRNA. This is Small ribosomal subunit protein uS7 from Borreliella burgdorferi (strain ATCC 35210 / DSM 4680 / CIP 102532 / B31) (Borrelia burgdorferi).